Here is a 245-residue protein sequence, read N- to C-terminus: Large ribosomal subunit protein uL29m (245 aa).

Composition is skewed to low complexity over residues 36 to 49 (SFNS…TSSS) and 234 to 245 (STKSETTTSKNI). Disordered regions lie at residues 36–98 (SFNS…NPDH) and 207–245 (RPSP…SKNI).

It belongs to the universal ribosomal protein uL29 family. Component of the mitochondrial large ribosomal subunit. Mature mitochondrial ribosomes consist of a small (37S) and a large (54S) subunit. The 37S subunit contains at least 33 different proteins and 1 molecule of RNA (15S). The 54S subunit contains at least 45 different proteins and 1 molecule of RNA (21S).

Its subcellular location is the mitochondrion. In Coccidioides immitis (strain RS) (Valley fever fungus), this protein is Large ribosomal subunit protein uL29m (MRPL4).